A 501-amino-acid polypeptide reads, in one-letter code: Probable malate:quinone oxidoreductase (501 aa).

The protein belongs to the MQO family. Requires FAD as cofactor.

It carries out the reaction (S)-malate + a quinone = a quinol + oxaloacetate. The protein operates within carbohydrate metabolism; tricarboxylic acid cycle; oxaloacetate from (S)-malate (quinone route): step 1/1. The sequence is that of Probable malate:quinone oxidoreductase from Paenarthrobacter aurescens (strain TC1).